The sequence spans 37 residues: Cellular retinoic acid-binding protein 2 (37 aa).

The short motif at 21–31 is the Nuclear localization signal element; sequence KALGVNMMLRK.

Belongs to the calycin superfamily. Fatty-acid binding protein (FABP) family. Embryo.

It localises to the cytoplasm. The protein resides in the endoplasmic reticulum. Its subcellular location is the nucleus. Its function is as follows. Transports retinoic acid to the nucleus. Regulates the access of retinoic acid to the nuclear retinoic acid receptors. The chain is Cellular retinoic acid-binding protein 2 (CRABP2) from Gallus gallus (Chicken).